The following is a 295-amino-acid chain: Defective in cullin neddylation protein AAR3 (295 aa).

Residues methionine 1–tyrosine 180 form the DCUN1 domain. The Nuclear localization signal signature appears at tyrosine 214 to leucine 221. The tract at residues tyrosine 214–asparagine 251 is disordered. Residues glutamate 237–leucine 247 are compositionally biased toward acidic residues.

It is found in the nucleus. May contribute to the neddylation of all cullins by transferring NEDD8 from N-terminally acetylated NEDD8-conjugating E2s enzyme to different cullin C-terminal domain-RBX complexes; neddylation of cullins play an essential role in the regulation of SCF-type complexes activity. Regulates responses to the synthetic auxin 2,4-dichlorophenoxyacetic acid (2,4-D) in roots, probably by modulating the SCF(TIR1) ubiquitin E3 ligase complex-mediated proteolysis. This is Defective in cullin neddylation protein AAR3 from Arabidopsis thaliana (Mouse-ear cress).